An 838-amino-acid chain; its full sequence is Protein translocase subunit SecA (838 aa).

ATP contacts are provided by residues glutamine 85, 103-107 (GEGKT), and aspartate 493. Zn(2+)-binding residues include cysteine 823, cysteine 825, cysteine 834, and histidine 835.

Belongs to the SecA family. Monomer and homodimer. Part of the essential Sec protein translocation apparatus which comprises SecA, SecYEG and auxiliary proteins SecDF. Other proteins may also be involved. Requires Zn(2+) as cofactor.

It is found in the cell membrane. Its subcellular location is the cytoplasm. It catalyses the reaction ATP + H2O + cellular proteinSide 1 = ADP + phosphate + cellular proteinSide 2.. Part of the Sec protein translocase complex. Interacts with the SecYEG preprotein conducting channel. Has a central role in coupling the hydrolysis of ATP to the transfer of proteins into and across the cell membrane, serving as an ATP-driven molecular motor driving the stepwise translocation of polypeptide chains across the membrane. In Streptococcus gordonii (strain Challis / ATCC 35105 / BCRC 15272 / CH1 / DL1 / V288), this protein is Protein translocase subunit SecA.